The primary structure comprises 150 residues: Endoribonuclease YbeY (150 aa).

Zn(2+)-binding residues include His-102, His-106, and His-112.

Belongs to the endoribonuclease YbeY family. Requires Zn(2+) as cofactor.

Its subcellular location is the cytoplasm. Its function is as follows. Single strand-specific metallo-endoribonuclease involved in late-stage 70S ribosome quality control and in maturation of the 3' terminus of the 16S rRNA. The protein is Endoribonuclease YbeY of Thermotoga maritima (strain ATCC 43589 / DSM 3109 / JCM 10099 / NBRC 100826 / MSB8).